The sequence spans 695 residues: Elongation factor G 1 (695 aa).

Positions 6–281 (TRYRNIGIFA…AVVDYLPNPK (276 aa)) constitute a tr-type G domain. Residues 15–22 (AHVDAGKT), 79–83 (DTPGH), and 133–136 (NKLD) each bind GTP.

This sequence belongs to the TRAFAC class translation factor GTPase superfamily. Classic translation factor GTPase family. EF-G/EF-2 subfamily.

The protein localises to the cytoplasm. Its function is as follows. Catalyzes the GTP-dependent ribosomal translocation step during translation elongation. During this step, the ribosome changes from the pre-translocational (PRE) to the post-translocational (POST) state as the newly formed A-site-bound peptidyl-tRNA and P-site-bound deacylated tRNA move to the P and E sites, respectively. Catalyzes the coordinated movement of the two tRNA molecules, the mRNA and conformational changes in the ribosome. In Synechocystis sp. (strain ATCC 27184 / PCC 6803 / Kazusa), this protein is Elongation factor G 1 (fusA).